A 595-amino-acid chain; its full sequence is Glutamyl-tRNA(Gln) amidotransferase subunit B, mitochondrial (595 aa).

The transit peptide at methionine 1–arginine 72 directs the protein to the mitochondrion.

The protein belongs to the GatB/GatE family. GatB subfamily. As to quaternary structure, subunit of the heterotrimeric GatCAB amidotransferase (AdT) complex, composed of A, B and C subunits.

The protein localises to the mitochondrion. The catalysed reaction is L-glutamyl-tRNA(Gln) + L-glutamine + ATP + H2O = L-glutaminyl-tRNA(Gln) + L-glutamate + ADP + phosphate + H(+). Its function is as follows. Allows the formation of correctly charged Gln-tRNA(Gln) through the transamidation of misacylated Glu-tRNA(Gln) in the mitochondria. The reaction takes place in the presence of glutamine and ATP through an activated gamma-phospho-Glu-tRNA(Gln). This chain is Glutamyl-tRNA(Gln) amidotransferase subunit B, mitochondrial, found in Talaromyces marneffei (strain ATCC 18224 / CBS 334.59 / QM 7333) (Penicillium marneffei).